A 247-amino-acid chain; its full sequence is Carboxy-S-adenosyl-L-methionine synthase (247 aa).

S-adenosyl-L-methionine-binding positions include tyrosine 40, 65–67, 90–91, 122–123, asparagine 137, and arginine 204; these read GAS, DN, and DI.

The protein belongs to the class I-like SAM-binding methyltransferase superfamily. Cx-SAM synthase family. In terms of assembly, homodimer.

The catalysed reaction is prephenate + S-adenosyl-L-methionine = carboxy-S-adenosyl-L-methionine + 3-phenylpyruvate + H2O. In terms of biological role, catalyzes the conversion of S-adenosyl-L-methionine (SAM) to carboxy-S-adenosyl-L-methionine (Cx-SAM). This Ectopseudomonas mendocina (strain ymp) (Pseudomonas mendocina) protein is Carboxy-S-adenosyl-L-methionine synthase.